We begin with the raw amino-acid sequence, 457 residues long: Adenylosuccinate synthetase isozyme 2 (457 aa).

Residues 40-46 and 68-70 contribute to the GTP site; these read GDEGKGK and GHT. The active-site Proton acceptor is the Asp41. Mg(2+) contacts are provided by Asp41 and Gly68. Asp41 lines the substrate pocket. IMP is bound by residues 41-44, 66-69, Thr163, Arg177, Asn256, Thr271, and Arg335; these read DEGK and NAGH. The active-site Proton donor is His69. 331 to 337 is a binding site for substrate; that stretch reads VTTGRKR. Residues Arg337, 363 to 365, and 445 to 448 each bind GTP; these read KLD and GVGK.

Belongs to the adenylosuccinate synthetase family. Homodimer. Mg(2+) serves as cofactor.

The protein resides in the cytoplasm. The protein localises to the mitochondrion. The catalysed reaction is IMP + L-aspartate + GTP = N(6)-(1,2-dicarboxyethyl)-AMP + GDP + phosphate + 2 H(+). The protein operates within purine metabolism; AMP biosynthesis via de novo pathway; AMP from IMP: step 1/2. With respect to regulation, inhibited competitively by AMP and IMP and non-competitively by fructose 1,6-bisphosphate. Its function is as follows. Plays an important role in the de novo pathway and in the salvage pathway of purine nucleotide biosynthesis. Catalyzes the first committed step in the biosynthesis of AMP from IMP. The protein is Adenylosuccinate synthetase isozyme 2 (adss2) of Xenopus laevis (African clawed frog).